The primary structure comprises 400 residues: Acetylornithine aminotransferase (400 aa).

Residues 106 to 107 and phenylalanine 132 contribute to the pyridoxal 5'-phosphate site; that span reads GA. Arginine 135 serves as a coordination point for N(2)-acetyl-L-ornithine. 217–220 contributes to the pyridoxal 5'-phosphate binding site; the sequence is DEVQ. Lysine 246 carries the N6-(pyridoxal phosphate)lysine modification. Serine 274 serves as a coordination point for N(2)-acetyl-L-ornithine. Residue threonine 275 participates in pyridoxal 5'-phosphate binding.

The protein belongs to the class-III pyridoxal-phosphate-dependent aminotransferase family. ArgD subfamily. As to quaternary structure, homodimer. Requires pyridoxal 5'-phosphate as cofactor.

It is found in the cytoplasm. The enzyme catalyses N(2)-acetyl-L-ornithine + 2-oxoglutarate = N-acetyl-L-glutamate 5-semialdehyde + L-glutamate. The protein operates within amino-acid biosynthesis; L-arginine biosynthesis; N(2)-acetyl-L-ornithine from L-glutamate: step 4/4. The sequence is that of Acetylornithine aminotransferase from Streptomyces clavuligerus.